The sequence spans 132 residues: Small ribosomal subunit protein uS8 (132 aa).

This sequence belongs to the universal ribosomal protein uS8 family. Part of the 30S ribosomal subunit. Contacts proteins S5 and S12.

Functionally, one of the primary rRNA binding proteins, it binds directly to 16S rRNA central domain where it helps coordinate assembly of the platform of the 30S subunit. The sequence is that of Small ribosomal subunit protein uS8 from Renibacterium salmoninarum (strain ATCC 33209 / DSM 20767 / JCM 11484 / NBRC 15589 / NCIMB 2235).